Reading from the N-terminus, the 213-residue chain is Redox-sensing transcriptional repressor Rex (213 aa).

A DNA-binding region (H-T-H motif) is located at residues 17–56 (LYYRIFKRFYADQVEKASSKQIADAMGIDSATVRRDFSYF). Residue 91 to 96 (GCGNIG) participates in NAD(+) binding.

Belongs to the transcriptional regulatory Rex family. Homodimer.

Its subcellular location is the cytoplasm. In terms of biological role, modulates transcription in response to changes in cellular NADH/NAD(+) redox state. This Streptococcus uberis (strain ATCC BAA-854 / 0140J) protein is Redox-sensing transcriptional repressor Rex.